A 378-amino-acid chain; its full sequence is MNIWLNMLTTTGLGAIIGGYTNHLAIKMLFRPHRPIYIGKFQVPFTPGLIPKRRDELAVQLGKMVVEHLLTPEGIGKKLTNEEFQKGLIHWAQVEVDKVITNEQSLRHMLEKWNVAHVEEEATRKIEHVITEKIHAFLAEYYTYTWEQALPHSVNEKVENAIPNVSAFILERGISFFESEEGKARLSKMIDDFFASRGTLLNLVGMFLGNVSVVDRVQPEVIKFLGQDATKQLLTDVLQKEWEKLKGRDVKELEAFVEKEMIVSSVLSAVKVEETVSKFLNQSVQQVCEPVRETIIEKVVPSAVAKGLKWGTENVESILNNLHLAEIVQQEVSTFSTERLEDLVLSITKNELKMITYLGALLGGMIGLVQGLLLLFLR.

The helical transmembrane segment at 357–377 (YLGALLGGMIGLVQGLLLLFL) threads the bilayer.

It belongs to the UPF0754 family.

Its subcellular location is the cell membrane. In Bacillus cereus (strain ATCC 14579 / DSM 31 / CCUG 7414 / JCM 2152 / NBRC 15305 / NCIMB 9373 / NCTC 2599 / NRRL B-3711), this protein is UPF0754 membrane protein BC_0879.